Reading from the N-terminus, the 117-residue chain is Nascent polypeptide-associated complex protein (117 aa).

The NAC-A/B domain maps to 3–72; sequence PVNPRDLEKM…YTVEKPREET (70 aa).

This sequence belongs to the NAC-alpha family. Homodimer. Interacts with the ribosome. Binds ribosomal RNA.

In terms of biological role, contacts the emerging nascent chain on the ribosome. This chain is Nascent polypeptide-associated complex protein, found in Aeropyrum pernix (strain ATCC 700893 / DSM 11879 / JCM 9820 / NBRC 100138 / K1).